The following is a 199-amino-acid chain: Recombination protein RecR (199 aa).

The segment at 58–73 (CQTCRILSETDLCSLC) adopts a C4-type zinc-finger fold. A Toprim domain is found at 81-176 (GQLCVVEMPS…TTTRIAHGVP (96 aa)).

Belongs to the RecR family.

May play a role in DNA repair. It seems to be involved in an RecBC-independent recombinational process of DNA repair. It may act with RecF and RecO. This Nitrosococcus oceani (strain ATCC 19707 / BCRC 17464 / JCM 30415 / NCIMB 11848 / C-107) protein is Recombination protein RecR.